We begin with the raw amino-acid sequence, 715 residues long: Probable phospholipase YOR022C, mitochondrial (715 aa).

The N-terminal 22 residues, 1-22 (MLRFTHRGLPSSTRFRNIFVRL), are a transit peptide targeting the mitochondrion. Disordered stretches follow at residues 161-180 (YPVDKENEGEQKNGSSNKDE), 242-268 (TSTSFKAAKTPQTEVADGSNSSKSRSI), and 311-340 (YNNADNSQGANASSKIEDGKNSGASDRQIR). Residues 242–251 (TSTSFKAAKT) show a composition bias toward low complexity. The span at 311-324 (YNNADNSQGANASS) shows a compositional bias: polar residues. Serine 501 is an active-site residue. Positions 519-700 (LEFQVDNLFF…AAFILKEILS (182 aa)) constitute a DDHD domain.

The protein belongs to the PA-PLA1 family.

It is found in the mitochondrion. In terms of biological role, probable phospholipase that hydrolyzes phosphatidic acid. This chain is Probable phospholipase YOR022C, mitochondrial, found in Saccharomyces cerevisiae (strain ATCC 204508 / S288c) (Baker's yeast).